Reading from the N-terminus, the 146-residue chain is Hemoglobin subunit beta (146 aa).

The Globin domain occupies 2–146 (HWTAEEKQLI…VAHALARKYH (145 aa)). Heme b contacts are provided by His63 and His92.

The protein belongs to the globin family. Heterotetramer of two alpha chains and two beta chains. As to expression, red blood cells.

Its function is as follows. Involved in oxygen transport from the lung to the various peripheral tissues. This is Hemoglobin subunit beta (HBB) from Ciconia ciconia (White stork).